Here is a 347-residue protein sequence, read N- to C-terminus: NADH-ubiquinone oxidoreductase chain 2 (347 aa).

10 consecutive transmembrane segments (helical) span residues 13 to 33, 55 to 75, 96 to 116, 122 to 142, 151 to 171, 178 to 198, 199 to 219, 237 to 257, 274 to 294, and 326 to 346; these read IFTG…WLGL, AAIK…MAIL, LMIV…FWVP, VPLT…ISIM, TNIL…GGLN, ILAY…PYNP, DITI…FLIL, LTWL…LPPL, GNLI…YFYV, and LPTL…ILSI.

Belongs to the complex I subunit 2 family. As to quaternary structure, core subunit of respiratory chain NADH dehydrogenase (Complex I) which is composed of 45 different subunits. Interacts with TMEM242.

The protein resides in the mitochondrion inner membrane. It carries out the reaction a ubiquinone + NADH + 5 H(+)(in) = a ubiquinol + NAD(+) + 4 H(+)(out). In terms of biological role, core subunit of the mitochondrial membrane respiratory chain NADH dehydrogenase (Complex I) which catalyzes electron transfer from NADH through the respiratory chain, using ubiquinone as an electron acceptor. Essential for the catalytic activity and assembly of complex I. This chain is NADH-ubiquinone oxidoreductase chain 2, found in Pongo abelii (Sumatran orangutan).